The chain runs to 182 residues: Ferritin heavy chain (182 aa).

Position 1 is an N-acetylmethionine (Met1). N-acetylthreonine; in Ferritin heavy chain, N-terminally processed is present on Thr2. One can recognise a Ferritin-like diiron domain in the interval 11–160 (QNYHQDSEAA…DHVTNLRKMG (150 aa)). The Fe cation site is built by Glu28, Glu63, His66, Glu108, and Gln142.

Belongs to the ferritin family. In terms of assembly, oligomer of 24 subunits. There are two types of subunits: L (light) chain and H (heavy) chain. The major chain can be light or heavy, depending on the species and tissue type. The functional molecule forms a roughly spherical shell with a diameter of 12 nm and contains a central cavity into which the insoluble mineral iron core is deposited. Interacts with NCOA4; NCOA4 promotes targeting of the iron-binding ferritin complex to autolysosomes following starvation or iron depletion.

The protein resides in the cytoplasm. The protein localises to the lysosome. Its subcellular location is the cytoplasmic vesicle. It localises to the autophagosome. It catalyses the reaction 4 Fe(2+) + O2 + 4 H(+) = 4 Fe(3+) + 2 H2O. Its function is as follows. Stores iron in a soluble, non-toxic, readily available form. Important for iron homeostasis. Has ferroxidase activity. Iron is taken up in the ferrous form and deposited as ferric hydroxides after oxidation. Also plays a role in delivery of iron to cells. Mediates iron uptake in capsule cells of the developing kidney. Delivery to lysosomes is mediated by the cargo receptor NCOA4 for autophagic degradation and release of iron. The sequence is that of Ferritin heavy chain (Fth1) from Rattus norvegicus (Rat).